The chain runs to 62 residues: Guanine nucleotide-binding protein subunit gamma (62 aa).

A disordered region spans residues 40-62; sequence DMLVSGPTDQHNPFQEKKSCSVL. Basic and acidic residues predominate over residues 53–62; the sequence is FQEKKSCSVL. Residue cysteine 59 is modified to Cysteine methyl ester. Cysteine 59 carries S-geranylgeranyl cysteine lipidation. The propeptide at 60 to 62 is removed in mature form; that stretch reads SVL.

The protein belongs to the G protein gamma family. As to quaternary structure, g proteins are composed of 3 units, alpha, beta and gamma. Interacts with gpb-1 and gpb-2. As to expression, predominantly expressed in the central nervous system.

The protein resides in the cell membrane. Its function is as follows. Guanine nucleotide-binding proteins (G proteins) are involved as a modulator or transducer in various transmembrane signaling systems. The beta and gamma chains are required for the GTPase activity, for replacement of GDP by GTP, and for G protein-effector interaction. The polypeptide is Guanine nucleotide-binding protein subunit gamma (gpc-1) (Caenorhabditis elegans).